Reading from the N-terminus, the 239-residue chain is Adapter protein MecA (239 aa).

A compositionally biased stretch (basic and acidic residues) spans 118 to 128; sequence EQRTKEKEAQG. The disordered stretch occupies residues 118–137; it reads EQRTKEKEAQGSKRQKSSAR.

It belongs to the MecA family. As to quaternary structure, homodimer.

In terms of biological role, enables the recognition and targeting of unfolded and aggregated proteins to the ClpC protease or to other proteins involved in proteolysis. The chain is Adapter protein MecA from Staphylococcus aureus (strain COL).